The following is a 286-amino-acid chain: ATP synthase gamma chain (286 aa).

It belongs to the ATPase gamma chain family. As to quaternary structure, F-type ATPases have 2 components, CF(1) - the catalytic core - and CF(0) - the membrane proton channel. CF(1) has five subunits: alpha(3), beta(3), gamma(1), delta(1), epsilon(1). CF(0) has three main subunits: a, b and c.

The protein resides in the cell membrane. Functionally, produces ATP from ADP in the presence of a proton gradient across the membrane. The gamma chain is believed to be important in regulating ATPase activity and the flow of protons through the CF(0) complex. In Bacillus cereus (strain G9842), this protein is ATP synthase gamma chain.